The following is a 1601-amino-acid chain: Rap guanine nucleotide exchange factor 6 (1601 aa).

Met-1 is modified (N-acetylmethionine). Disordered stretches follow at residues 1–22 (MNSPVDPGARQALRKKPPERTP) and 179–250 (PHPQ…QGRD). Ser-3 is subject to Phosphoserine. Over residues 187–205 (SSSQSGCSIASDSGSSSLS) the composition is skewed to low complexity. Over residues 228-241 (VDSEDDEEEDEEID) the composition is skewed to acidic residues. 280–399 (AFANMTMSVR…VEEEGEIVMV (120 aa)) provides a ligand contact to a nucleoside 3',5'-cyclic phosphate. The N-terminal Ras-GEF domain maps to 412–526 (KGHIVIKATP…LLNIACAAKA (115 aa)). One can recognise a PDZ domain in the interval 530 to 615 (QVVLQKASRE…LTVKTNIFVF (86 aa)). Residues 749-835 (PDQVIRVFKV…GRYYLKNNME (87 aa)) form the Ras-associating domain. In terms of domain architecture, Ras-GEF spans 860–1088 (STIEVATQLS…LDVQGGAHKK (229 aa)). Disordered stretches follow at residues 1192–1274 (IRKK…SRSS), 1302–1324 (ESTGALEKTEHASGIGDHSQHGP), 1455–1478 (LESTPAESSEGLDPKDATDPVYKT), and 1571–1601 (QRHNLQPFHPKLGDVTDADSEADENEQVSAV). 2 stretches are compositionally biased toward low complexity: residues 1229–1238 (SVASSLHSSP) and 1255–1274 (SAKSDNLSDSSHSEISSRSS). Positions 1586–1601 (TDADSEADENEQVSAV) are enriched in acidic residues.

As to quaternary structure, interacts with the second PDZ domain of human PTP1e. In terms of tissue distribution, isoform 3 has highest expression levels in the brain, heart, liver, lung and placenta and is barely detectable in skeletal muscle, kidney and pancreas.

It is found in the cytoplasm. The protein resides in the cell membrane. Its function is as follows. Guanine nucleotide exchange factor (GEF) for Rap1A, Rap2A and M-Ras GTPases. Does not interact with cAMP. The polypeptide is Rap guanine nucleotide exchange factor 6 (RAPGEF6) (Homo sapiens (Human)).